We begin with the raw amino-acid sequence, 111 residues long: Type III endosome membrane protein TEMP (111 aa).

Over 1–27 the chain is Extracellular; sequence MIGGNTTIISGAINASTEAPGLGTGGR. Asparagine 5 is a glycosylation site (N-linked (GlcNAc...) asparagine). A helical; Signal-anchor for type III membrane protein transmembrane segment spans residues 28–48; sequence AWPVLVGVVLGAVVLSILIAL. The Cytoplasmic portion of the chain corresponds to 49–111; that stretch reads AAKCHLCRRY…TTGSRDHFSL (63 aa). The interval 64–111 is disordered; that stretch reads HRPLSSAGGGNRPPVGEDEDDDGFIEDNYIQPGAGEMETTGSRDHFSL. Residues 79–88 are compositionally biased toward acidic residues; sequence GEDEDDDGFI.

Expressed in stomach, kidney, large and small intestine and kidney.

It is found in the membrane. Its subcellular location is the early endosome. The protein localises to the recycling endosome. It localises to the cell membrane. In terms of biological role, may be involved in membrane trafficking between endosomes and plasma membrane. In Mus musculus (Mouse), this protein is Type III endosome membrane protein TEMP.